We begin with the raw amino-acid sequence, 157 residues long: MSMKTKAAFHLVLFGLACWALISYFEASEGIASFFGTKSGGMVFDLNLTPFILFVAASAVYLYLQKKSRPARKQLLLPDEFEEQDEREQMMTAKACRASYIAVYFSLPAAAVLLIFYPLFQSRIPFFPIIIVFIIMIIQHLSYVISFKKNEKNSGAL.

Residues 1-17 (MSMKTKAAFHLVLFGLA) form the signal peptide. Cysteine 18 carries N-palmitoyl cysteine lipidation. Cysteine 18 carries S-diacylglycerol cysteine lipidation. Transmembrane regions (helical) follow at residues 42 to 64 (MVFD…YLYL), 98 to 120 (ASYI…YPLF), and 124 to 146 (IPFF…YVIS).

The protein localises to the cell membrane. This is an uncharacterized protein from Bacillus subtilis (strain 168).